We begin with the raw amino-acid sequence, 2531 residues long: Serine/threonine-protein kinase ATR (2531 aa).

The FAT domain occupies 1490-2067 (LIVKVAETFG…MWQSAYLLRQ (578 aa)). Residues 2192-2512 (FSDKVKVLHS…VSQLASSLIE (321 aa)) form the PI3K/PI4K catalytic domain. A G-loop region spans residues 2198 to 2204 (VLHSNTK). A catalytic loop region spans residues 2368–2376 (GLGDRHTKN). The interval 2387–2411 (HVDFDMIFNKGETLGTPELVPFRLT) is activation loop. An FATC domain is found at 2499-2531 (HPMQVSQLASSLIELATSEEKLSEMYLGWMATL).

Belongs to the PI3/PI4-kinase family. ATM subfamily. Mn(2+) serves as cofactor.

The protein localises to the nucleus. It carries out the reaction L-seryl-[protein] + ATP = O-phospho-L-seryl-[protein] + ADP + H(+). The catalysed reaction is L-threonyl-[protein] + ATP = O-phospho-L-threonyl-[protein] + ADP + H(+). Serine/threonine protein kinase which activates checkpoint signaling upon genotoxic stresses such as ionizing radiation (IR), ultraviolet light (UV), or DNA replication stalling, thereby acting as a DNA damage sensor. Recognizes the substrate consensus sequence [ST]-Q. Phosphorylates various proteins, which collectively inhibits DNA replication and mitosis and promotes DNA repair and recombination. Prevents mitotic catastrophe by functioning in the S-phase checkpoint and cooperating with atm-1 in the checkpoint response to double-strand breaks (DSBs) after ionizing radiation (IR) to induce cell cycle arrest or apoptosis via the cep-1/p53 pathway. In response to ionizing radiation, probably required for the association between the brc-1-brd-1 heterodimer and rad-51 and let-70 in order to activate E3-ubiquitin ligase activity of the heterodimer and induce ubiquitination at DNA damage sites. The chain is Serine/threonine-protein kinase ATR from Caenorhabditis elegans.